The following is a 1012-amino-acid chain: MVSKMIIENFEALKSWLSKTLEPICDADPSALAKYVLALVKKDKSEKELKALCIDQLDVFLQKETQIFVEKLFDAVNTKSYLPPPEQPSSGSLKVDFLQHQEKDIKKEELTKEEEREKKFSRRLNHSPPQSSSRYRDNRSRDERKKDDRSRKRDYDRNPPRRDSYRDRYNRRRGRSRSYSRSRSRSWSKERLRDRDRDRSRTRSRSRTRSRERDLVKPKYDLDRTDPLENNYTPVSSVSNISSGHYPVPTLSSTITVIAPTHHGNNTTESWSEFHEDQVDHNSYVRPPMPKKRCRDYDEKGFCMRGDMCPFDHGSDPVVVEDVNLPGMLPFPAQPPVVEGPPPPGLPPPPPILTPPPVNLRPPVPPPGPLPPSLPPVTGPPPPLPPLQPSGMDAPPNSATSSVPTVVTTGIHHQPPPAPPSLFTAVFVLPDTYDTDGYNPEAPSITNTSRPMYRHRVHAQRPNLIGLTSGDMDLPPREKPPNKSSMRIVVDSESRKRTIGSGEPGVSTKKTWFDKPNFNRTNSPGFQKKVQFGNENTKLELRKVPPELNNISKLNEHFSRFGTLVNLQVAYNGDPEGALIQFATYEEAKKAISSTEAVLNNRFIKVYWHREGTTQQLQTTSPKVIQPLVQQPILPVVKQSVKERLGPVPSATTEPAEAQSATSELPQNVTKLSVKDRLGFVSKPSVSATEKVLSTSTGLTKTVYNPAALKAAQKTLSVSTPAVDNNEAQKKKQEALKLQQDVRKRKQEILEKHIETQKMLISKLEKNKTMKSEDKAEIMKTLEILTKNITKLKDEVKSTSPGRCLPKSIKTKTQMQKELLDTELDLYKKMQAGEEVTELRRKYTELQLEAAKRGILSSGRGRGIHTRGRGTAHGRGRGRGRGRGVPGHAVVDHRPRALEISAFTESDREDLLPHFAQYGEIEDCQIDDASLHAIITFKTRAEAEAAAIHGARFKGQDLKLAWNKPIANMSAVDTEEAEPDEEEFQEESLVDDSLLQDDDEEEEDNESRSWRR.

K94 participates in a covalent cross-link: Glycyl lysine isopeptide (Lys-Gly) (interchain with G-Cter in SUMO2). Residues 98 to 127 (LQHQEKDIKKEELTKEEEREKKFSRRLNHS) adopt a coiled-coil conformation. Residue K106 forms a Glycyl lysine isopeptide (Lys-Gly) (interchain with G-Cter in SUMO1); alternate linkage. K106 is covalently cross-linked (Glycyl lysine isopeptide (Lys-Gly) (interchain with G-Cter in SUMO2); alternate). Residues 106–118 (KKEELTKEEEREK) are compositionally biased toward basic and acidic residues. The segment at 106-236 (KKEELTKEEE…PLENNYTPVS (131 aa)) is disordered. S127 is subject to Phosphoserine. Residues 134–168 (RYRDNRSRDERKKDDRSRKRDYDRNPPRRDSYRDR) are compositionally biased toward basic and acidic residues. Residues 169-186 (YNRRRGRSRSYSRSRSRS) are compositionally biased toward basic residues. Composition is skewed to basic and acidic residues over residues 187–201 (WSKE…DRSR) and 209–227 (RSRE…RTDP). Residues 288–316 (PMPKKRCRDYDEKGFCMRGDMCPFDHGSD) form a C3H1-type zinc finger. Over residues 334 to 388 (QPPVVEGPPPPGLPPPPPILTPPPVNLRPPVPPPGPLPPSLPPVTGPPPPLPPLQ) the composition is skewed to pro residues. 2 disordered regions span residues 334-404 (QPPV…SSVP) and 465-520 (IGLT…NFNR). A compositionally biased stretch (low complexity) spans 394 to 404 (APPNSATSSVP). S501 carries the phosphoserine modification. K515 is subject to N6-acetyllysine. A Phosphoserine modification is found at S523. An RRM 1 domain is found at 537 to 611 (TKLELRKVPP…RFIKVYWHRE (75 aa)). S621 is subject to Phosphoserine. The disordered stretch occupies residues 647–667 (PVPSATTEPAEAQSATSELPQ). 2 coiled-coil regions span residues 724–800 (DNNE…KSTS) and 828–852 (KKMQ…EAAK). Positions 858–889 (SGRGRGIHTRGRGTAHGRGRGRGRGRGVPGHA) are disordered. Residues 862–882 (RGIHTRGRGTAHGRGRGRGRG) show a composition bias toward basic residues. Positions 896 to 965 (RALEISAFTE…QDLKLAWNKP (70 aa)) constitute an RRM 2 domain. The segment at 970–1012 (SAVDTEEAEPDEEEFQEESLVDDSLLQDDDEEEEDNESRSWRR) is disordered. Acidic residues predominate over residues 973–1005 (DTEEAEPDEEEFQEESLVDDSLLQDDDEEEEDN).

As to expression, expressed in testis and ovary.

May be involved in the turnover of nuclear polyadenylated (pA+) RNA. The polypeptide is RNA-binding protein 26 (Mus musculus (Mouse)).